Reading from the N-terminus, the 337-residue chain is Putative 4-hydroxythreonine-4-phosphate dehydrogenase (337 aa).

A divalent metal cation-binding residues include His172, His216, and His271.

Belongs to the PdxA family. As to quaternary structure, homodimer. Zn(2+) serves as cofactor. It depends on Mg(2+) as a cofactor. Co(2+) is required as a cofactor.

The protein localises to the cytoplasm. It catalyses the reaction 4-(phosphooxy)-L-threonine + NAD(+) = 3-amino-2-oxopropyl phosphate + CO2 + NADH. Its pathway is cofactor biosynthesis; pyridoxine 5'-phosphate biosynthesis; pyridoxine 5'-phosphate from D-erythrose 4-phosphate: step 4/5. In terms of biological role, catalyzes the NAD(P)-dependent oxidation of 4-(phosphooxy)-L-threonine (HTP) into 2-amino-3-oxo-4-(phosphooxy)butyric acid which spontaneously decarboxylates to form 3-amino-2-oxopropyl phosphate (AHAP). This is Putative 4-hydroxythreonine-4-phosphate dehydrogenase from Pasteurella multocida (strain Pm70).